A 214-amino-acid chain; its full sequence is Large ribosomal subunit protein uL3 (214 aa).

The residue at position 155 (Q155) is an N5-methylglutamine.

This sequence belongs to the universal ribosomal protein uL3 family. Part of the 50S ribosomal subunit. Forms a cluster with proteins L14 and L19. Methylated by PrmB.

In terms of biological role, one of the primary rRNA binding proteins, it binds directly near the 3'-end of the 23S rRNA, where it nucleates assembly of the 50S subunit. The sequence is that of Large ribosomal subunit protein uL3 from Acinetobacter baumannii (strain ACICU).